Here is a 408-residue protein sequence, read N- to C-terminus: Gustatory receptor 10a (408 aa).

Over 1–20 the chain is Cytoplasmic; sequence MTSPDERKSFWERHEFKFYR. The chain crosses the membrane as a helical span at residues 21 to 38; it reads YGHVYALIYGQVVIDYVP. Topologically, residues 39-48 are extracellular; the sequence is QRALKRGVKV. A helical membrane pass occupies residues 49-69; that stretch reads LLIAYGHLFSMLLIVVLPGYF. Topologically, residues 70 to 86 are cytoplasmic; sequence CYHFRTLTDTLDRRLQL. A helical transmembrane segment spans residues 87–107; the sequence is LFYVSFTNTAIKYATVIVTYV. Residues 108–144 are Extracellular-facing; sequence ANTVHFEAINQRCTMQRTHLEFEFKNAPQEPKRPFEF. The chain crosses the membrane as a helical span at residues 145–165; that stretch reads FMYFKFCLINLMMMIQVCGIF. Residues 166-270 are Cytoplasmic-facing; the sequence is AQYGEVGKGS…RESFRMHQFQ (105 aa). A helical membrane pass occupies residues 271–291; sequence LIGLMLSTLINNLTNFYTLFH. Topologically, residues 292–304 are extracellular; it reads MLAKQSLEEVSYP. A helical transmembrane segment spans residues 305 to 325; that stretch reads VVVGSVYATGFYIDTYIVALI. Residues 326–381 lie on the Cytoplasmic side of the membrane; sequence NEHIKLELEAVALTMRRFAEPREMDERLTREIEHLSLELLNYQPPMLCGLLHLDRR. The chain crosses the membrane as a helical span at residues 382–402; sequence LVYLIAVTAFSYFITLVQFDL. Residues 403–408 are Extracellular-facing; it reads YLRKKS.

This sequence belongs to the insect chemoreceptor superfamily. Gustatory receptor (GR) family. Gr10a subfamily. In terms of tissue distribution, expressed in the medial aspect of the third antennal segment, and in neurons of the terminal external chemosensory organ of larvae.

It localises to the cell membrane. Functionally, probable gustatory receptor which mediates acceptance or avoidance behavior, depending on its substrates. The protein is Gustatory receptor 10a (Gr10a) of Drosophila melanogaster (Fruit fly).